We begin with the raw amino-acid sequence, 545 residues long: Lysine--tRNA ligase (545 aa).

The 'HIGH' region motif lies at 41 to 49 (PSGVPHLGH). The short motif at 306-310 (ALSSS) is the 'KMSKS' region element.

This sequence belongs to the class-I aminoacyl-tRNA synthetase family.

The protein resides in the cytoplasm. The enzyme catalyses tRNA(Lys) + L-lysine + ATP = L-lysyl-tRNA(Lys) + AMP + diphosphate. This chain is Lysine--tRNA ligase, found in Natronomonas pharaonis (strain ATCC 35678 / DSM 2160 / CIP 103997 / JCM 8858 / NBRC 14720 / NCIMB 2260 / Gabara) (Halobacterium pharaonis).